The primary structure comprises 493 residues: Cobyric acid synthase (493 aa).

The GATase cobBQ-type domain maps to 255–441 (ELEIAVLRLP…LHGLLENGRW (187 aa)). Cys-336 functions as the Nucleophile in the catalytic mechanism. His-433 is an active-site residue.

The protein belongs to the CobB/CobQ family. CobQ subfamily.

It functions in the pathway cofactor biosynthesis; adenosylcobalamin biosynthesis. Its function is as follows. Catalyzes amidations at positions B, D, E, and G on adenosylcobyrinic A,C-diamide. NH(2) groups are provided by glutamine, and one molecule of ATP is hydrogenolyzed for each amidation. The protein is Cobyric acid synthase of Synechococcus sp. (strain RCC307).